The following is a 192-amino-acid chain: Protein hunchback (192 aa).

Disordered regions lie at residues 16-59 (SHHH…SNTN), 88-108 (AAMT…WPGL), and 151-192 (ALTP…KYMA). Over residues 17–31 (HHHHHHHAHHSRRQH) the composition is skewed to basic residues. Polar residues predominate over residues 92 to 103 (PSPSNNDQNSPL). The segment covering 173–192 (EPEKEHDLMSNSSEDMKYMA) has biased composition (basic and acidic residues).

This sequence belongs to the hunchback C2H2-type zinc-finger protein family.

The protein localises to the nucleus. Gap class segmentation protein that controls development of head structures. In Drosophila adiastola (Fruit fly), this protein is Protein hunchback (hb).